We begin with the raw amino-acid sequence, 748 residues long: Malate synthase G (748 aa).

Acetyl-CoA-binding positions include valine 141, 148-149 (RF), serine 298, and arginine 335. Arginine 362 serves as the catalytic Proton acceptor. Residues arginine 362, glutamate 453, and 478 to 481 (GFLD) each bind glyoxylate. 2 residues coordinate Mg(2+): glutamate 453 and aspartate 481. Residue proline 562 participates in acetyl-CoA binding. Cysteine 639 bears the Cysteine sulfenic acid (-SOH) mark. Residue aspartate 653 is the Proton donor of the active site.

The protein belongs to the malate synthase family. GlcB subfamily. As to quaternary structure, monomer. Mg(2+) serves as cofactor.

It localises to the cytoplasm. It catalyses the reaction glyoxylate + acetyl-CoA + H2O = (S)-malate + CoA + H(+). It participates in carbohydrate metabolism; glyoxylate cycle; (S)-malate from isocitrate: step 2/2. Its function is as follows. Involved in the glycolate utilization. Catalyzes the condensation and subsequent hydrolysis of acetyl-coenzyme A (acetyl-CoA) and glyoxylate to form malate and CoA. This is Malate synthase G from Corynebacterium efficiens (strain DSM 44549 / YS-314 / AJ 12310 / JCM 11189 / NBRC 100395).